A 391-amino-acid polypeptide reads, in one-letter code: Arsenite methyltransferase (391 aa).

The tract at residues 1 to 126 (MELWTHPTPA…TMVADRDPEE (126 aa)) is disordered. Positions 28 to 39 (CSQPWATTPGTN) are enriched in polar residues. Low complexity predominate over residues 40-65 (SSDASRTPTTASASATSKPQSASARA). Residues 102-116 (KRSTTCEATMSNDNE) show a composition bias toward polar residues.

The protein belongs to the methyltransferase superfamily. Arsenite methyltransferase family.

The enzyme catalyses arsenic triglutathione + [thioredoxin]-dithiol + S-adenosyl-L-methionine + 2 H2O = methylarsonous acid + [thioredoxin]-disulfide + 3 glutathione + S-adenosyl-L-homocysteine + H(+). It catalyses the reaction arsenic triglutathione + 2 [thioredoxin]-dithiol + 2 S-adenosyl-L-methionine + H2O = dimethylarsinous acid + 2 [thioredoxin]-disulfide + 3 glutathione + 2 S-adenosyl-L-homocysteine + 2 H(+). The catalysed reaction is arsenic triglutathione + 3 [thioredoxin]-dithiol + 3 S-adenosyl-L-methionine = trimethylarsine + 3 [thioredoxin]-disulfide + 3 glutathione + 3 S-adenosyl-L-homocysteine + 3 H(+). Functionally, catalyzes the transfer of a methyl group from AdoMet to arsenite, producing methylated arsenicals. The chain is Arsenite methyltransferase from Halobacterium salinarum (strain ATCC 700922 / JCM 11081 / NRC-1) (Halobacterium halobium).